The following is a 447-amino-acid chain: Dihydroorotase (447 aa).

Histidine 81 and histidine 83 together coordinate Zn(2+). Substrate contacts are provided by residues 83-85 (HFR) and asparagine 115. Zn(2+) contacts are provided by aspartate 171, histidine 198, and histidine 252. Residue asparagine 298 coordinates substrate. Aspartate 325 is a binding site for Zn(2+). Aspartate 325 is a catalytic residue. Substrate contacts are provided by residues histidine 329 and 343–344 (FG).

This sequence belongs to the metallo-dependent hydrolases superfamily. DHOase family. Class I DHOase subfamily. Zn(2+) serves as cofactor.

The enzyme catalyses (S)-dihydroorotate + H2O = N-carbamoyl-L-aspartate + H(+). It participates in pyrimidine metabolism; UMP biosynthesis via de novo pathway; (S)-dihydroorotate from bicarbonate: step 3/3. Catalyzes the reversible cyclization of carbamoyl aspartate to dihydroorotate. This Ehrlichia canis (strain Jake) protein is Dihydroorotase.